A 124-amino-acid chain; its full sequence is UPF0342 protein DSY2926 (124 aa).

This sequence belongs to the UPF0342 family.

The protein is UPF0342 protein DSY2926 of Desulfitobacterium hafniense (strain Y51).